A 208-amino-acid polypeptide reads, in one-letter code: GTP cyclohydrolase 1 (208 aa).

Residues cysteine 89, histidine 92, and cysteine 163 each contribute to the Zn(2+) site.

It belongs to the GTP cyclohydrolase I family. As to quaternary structure, homomer.

The catalysed reaction is GTP + H2O = 7,8-dihydroneopterin 3'-triphosphate + formate + H(+). The protein operates within cofactor biosynthesis; 7,8-dihydroneopterin triphosphate biosynthesis; 7,8-dihydroneopterin triphosphate from GTP: step 1/1. This chain is GTP cyclohydrolase 1, found in Saccharolobus islandicus (strain Y.N.15.51 / Yellowstone #2) (Sulfolobus islandicus).